Here is a 273-residue protein sequence, read N- to C-terminus: MNNRVHQGHLARKRFGQNFLNDQFVIDSIVSAINPQKGQAMVEIGPGLAALTEPVGERLDKLTVIELDRDLAARLQTHPFLGPKLTIYQQDAMTFNFGELAEKMGQPLRVFGNLPYNISTPLMFHLFSYTDAIADMHFMLQKEVVNRLVAGPNSKAYGRLSVMAQYYCNVIPVLEVPPSAFTPPPKVDSAVVRLVPHATMPHPVKDVRVLSRITTEAFNQRRKTIRNSLGNLFSVEVLTGMGIDPAMRAENISVAQYCQMANYLAENALLQES.

S-adenosyl-L-methionine contacts are provided by asparagine 18, leucine 20, glycine 45, glutamate 66, aspartate 91, and asparagine 113.

The protein belongs to the class I-like SAM-binding methyltransferase superfamily. rRNA adenine N(6)-methyltransferase family. RsmA subfamily.

Its subcellular location is the cytoplasm. The catalysed reaction is adenosine(1518)/adenosine(1519) in 16S rRNA + 4 S-adenosyl-L-methionine = N(6)-dimethyladenosine(1518)/N(6)-dimethyladenosine(1519) in 16S rRNA + 4 S-adenosyl-L-homocysteine + 4 H(+). In terms of biological role, specifically dimethylates two adjacent adenosines (A1518 and A1519) in the loop of a conserved hairpin near the 3'-end of 16S rRNA in the 30S particle. May play a critical role in biogenesis of 30S subunits. The polypeptide is Ribosomal RNA small subunit methyltransferase A (Escherichia coli O17:K52:H18 (strain UMN026 / ExPEC)).